Consider the following 440-residue polypeptide: Xaa-Pro dipeptidase (440 aa).

Asp-244, Asp-255, His-335, Glu-380, and Glu-419 together coordinate Mn(2+).

The protein belongs to the peptidase M24B family. Bacterial-type prolidase subfamily. The cofactor is Mn(2+).

The enzyme catalyses Xaa-L-Pro dipeptide + H2O = an L-alpha-amino acid + L-proline. In terms of biological role, splits dipeptides with a prolyl residue in the C-terminal position. In Shewanella loihica (strain ATCC BAA-1088 / PV-4), this protein is Xaa-Pro dipeptidase.